A 126-amino-acid chain; its full sequence is MEKDLKFTASHEWVRDNGDGTVTVGISDHAQGLLGDVVFVDLPDVDDEVTAGEGFSLVESVKAASDIYSPVTGVIVEINEELEDSPEQVNEEPYESGWIARIKLSDSSELESLIPSDTYLESLDEE.

Positions 21 to 103 (TVTVGISDHA…YESGWIARIK (83 aa)) constitute a Lipoyl-binding domain. K62 is modified (N6-lipoyllysine).

Belongs to the GcvH family. In terms of assembly, the glycine cleavage system is composed of four proteins: P, T, L and H. It depends on (R)-lipoate as a cofactor.

Functionally, the glycine cleavage system catalyzes the degradation of glycine. The H protein shuttles the methylamine group of glycine from the P protein to the T protein. This Aliivibrio fischeri (strain MJ11) (Vibrio fischeri) protein is Glycine cleavage system H protein.